The primary structure comprises 603 residues: Myotubularin (603 aa).

The span at 1 to 13 (MASASTSKYNSHS) shows a compositional bias: polar residues. The segment at 1–25 (MASASTSKYNSHSLENESIKRTSRD) is disordered. Phosphoserine is present on residues Ser13 and Ser18. Basic and acidic residues predominate over residues 14–25 (LENESIKRTSRD). The GRAM domain maps to 29–97 (RDLTEAVPRL…GVISRIEKMG (69 aa)). One can recognise a Myotubularin phosphatase domain in the interval 163–538 (GWTVYNPVEE…RHLELWVNYY (376 aa)). Residues Asn288, Asn313, and Ile314 each contribute to the a 1,2-diacyl-sn-glycero-3-phospho-(1D-myo-inositol-3,5-bisphosphate) site. Residues Asn288, Asn313, and Ile314 each coordinate a 1,2-diacyl-sn-glycero-3-phospho-(1D-myo-inositol-3-phosphate). Cys375 functions as the Phosphocysteine intermediate in the catalytic mechanism. A 1,2-diacyl-sn-glycero-3-phospho-(1D-myo-inositol-3,5-bisphosphate) is bound by residues Ser376, Asp377, Gly378, Trp379, Asp380, Arg381, Lys417, and Arg421. Positions 376, 377, 378, 379, 380, and 381 each coordinate a 1,2-diacyl-sn-glycero-3-phospho-(1D-myo-inositol-3-phosphate). Residue Arg421 participates in a 1,2-diacyl-sn-glycero-3-phospho-(1D-myo-inositol-3-phosphate) binding. Residue Thr495 is modified to Phosphothreonine. Positions 579–603 (SAKLSDPPTSPSSPSQMMPHVQTHF) are disordered. Ser588 is modified (phosphoserine).

The protein belongs to the protein-tyrosine phosphatase family. Non-receptor class myotubularin subfamily. Heterodimer with MTMR12. Interacts with KMT2A/MLL1 (via SET domain). Interacts with DES in skeletal muscle but not in cardiac muscle. Interacts with SPEG.

The protein localises to the cytoplasm. The protein resides in the cell membrane. It localises to the cell projection. It is found in the filopodium. Its subcellular location is the ruffle. The protein localises to the late endosome. The protein resides in the myofibril. It localises to the sarcomere. It carries out the reaction a 1,2-diacyl-sn-glycero-3-phospho-(1D-myo-inositol-3-phosphate) + H2O = a 1,2-diacyl-sn-glycero-3-phospho-(1D-myo-inositol) + phosphate. The enzyme catalyses a 1,2-diacyl-sn-glycero-3-phospho-(1D-myo-inositol-3,5-bisphosphate) + H2O = a 1,2-diacyl-sn-glycero-3-phospho-(1D-myo-inositol-5-phosphate) + phosphate. It catalyses the reaction 1,2-dioctanoyl-sn-glycero-3-phospho-(1-D-myo-inositol-3-phosphate) + H2O = 1,2-dioctanoyl-sn-glycero-3-phospho-(1D-myo-inositol) + phosphate. The catalysed reaction is 1,2-dioctanoyl-sn-glycero-3-phospho-(1D-myo-inositol-3,5-bisphosphate) + H2O = 1,2-dioctanoyl-sn-glycero-3-phospho-(1D-myo-inositol-5-phosphate) + phosphate. It carries out the reaction 1,2-dihexadecanoyl-sn-glycero-3-phospho-(1D-myo-inositol-3,5-phosphate) + H2O = 1,2-dihexadecanoyl-sn-glycero-3-phospho-(1D-myo-inositol-5-phosphate) + phosphate. Its activity is regulated as follows. Allosterically activated by phosphatidylinositol 5-phosphate (PI5P). Lipid phosphatase which dephosphorylates phosphatidylinositol 3-monophosphate (PI3P) and phosphatidylinositol 3,5-bisphosphate (PI(3,5)P2). Has also been shown to dephosphorylate phosphotyrosine- and phosphoserine-containing peptides. Negatively regulates EGFR degradation through regulation of EGFR trafficking from the late endosome to the lysosome. Plays a role in vacuolar formation and morphology. Regulates desmin intermediate filament assembly and architecture. Plays a role in mitochondrial morphology and positioning. Required for skeletal muscle maintenance but not for myogenesis. In skeletal muscles, stabilizes MTMR12 protein levels. The protein is Myotubularin of Pongo abelii (Sumatran orangutan).